We begin with the raw amino-acid sequence, 395 residues long: Acetate kinase (395 aa).

Position 8 (N8) interacts with Mg(2+). K15 lines the ATP pocket. R89 serves as a coordination point for substrate. D146 acts as the Proton donor/acceptor in catalysis. Residues 206-210, 281-283, and 329-333 contribute to the ATP site; these read HLGNG, DLR, and GIGEN. E382 lines the Mg(2+) pocket.

It belongs to the acetokinase family. In terms of assembly, homodimer. Mg(2+) is required as a cofactor. It depends on Mn(2+) as a cofactor.

The protein resides in the cytoplasm. It carries out the reaction acetate + ATP = acetyl phosphate + ADP. It participates in metabolic intermediate biosynthesis; acetyl-CoA biosynthesis; acetyl-CoA from acetate: step 1/2. Its function is as follows. Catalyzes the formation of acetyl phosphate from acetate and ATP. Can also catalyze the reverse reaction. The chain is Acetate kinase from Bacillus velezensis (strain DSM 23117 / BGSC 10A6 / LMG 26770 / FZB42) (Bacillus amyloliquefaciens subsp. plantarum).